Consider the following 155-residue polypeptide: MSTEKINFDIHKILTLLPHRYPILLVDRVLELEPHKAIKALKNVTVNEPFFTGHFPKRPVMPGVLIIEALAQAAALLTFAEAQPKDPENTLYYFVGIDNARFKRVVEPGDQLILNVTFERYIRGIWKFKAVAEVDGKVAAEAELMCTVKTADAAP.

His-54 is a catalytic residue.

This sequence belongs to the thioester dehydratase family. FabZ subfamily.

Its subcellular location is the cytoplasm. It carries out the reaction a (3R)-hydroxyacyl-[ACP] = a (2E)-enoyl-[ACP] + H2O. Functionally, involved in unsaturated fatty acids biosynthesis. Catalyzes the dehydration of short chain beta-hydroxyacyl-ACPs and long chain saturated and unsaturated beta-hydroxyacyl-ACPs. This is 3-hydroxyacyl-[acyl-carrier-protein] dehydratase FabZ from Burkholderia mallei (strain NCTC 10247).